A 275-amino-acid polypeptide reads, in one-letter code: Formamidopyrimidine-DNA glycosylase (275 aa).

The active-site Schiff-base intermediate with DNA is proline 2. The active-site Proton donor is the glutamate 3. Residue lysine 58 is the Proton donor; for beta-elimination activity of the active site. Positions 93, 111, and 156 each coordinate DNA. The segment at 241–275 (FVYDRAGEPCRVCGTPIRQIVQGQRSTYFCPTCQR) adopts an FPG-type zinc-finger fold. The Proton donor; for delta-elimination activity role is filled by arginine 265.

Belongs to the FPG family. In terms of assembly, monomer. Zn(2+) serves as cofactor.

The enzyme catalyses Hydrolysis of DNA containing ring-opened 7-methylguanine residues, releasing 2,6-diamino-4-hydroxy-5-(N-methyl)formamidopyrimidine.. It carries out the reaction 2'-deoxyribonucleotide-(2'-deoxyribose 5'-phosphate)-2'-deoxyribonucleotide-DNA = a 3'-end 2'-deoxyribonucleotide-(2,3-dehydro-2,3-deoxyribose 5'-phosphate)-DNA + a 5'-end 5'-phospho-2'-deoxyribonucleoside-DNA + H(+). Functionally, involved in base excision repair of DNA damaged by oxidation or by mutagenic agents. Acts as a DNA glycosylase that recognizes and removes damaged bases. Has a preference for oxidized purines, such as 7,8-dihydro-8-oxoguanine (8-oxoG). Has AP (apurinic/apyrimidinic) lyase activity and introduces nicks in the DNA strand. Cleaves the DNA backbone by beta-delta elimination to generate a single-strand break at the site of the removed base with both 3'- and 5'-phosphates. This Burkholderia multivorans (strain ATCC 17616 / 249) protein is Formamidopyrimidine-DNA glycosylase.